The chain runs to 203 residues: Urease accessory protein UreE (203 aa).

The interval 170-203 (EHHGHSHSHSHSHSHDHDHQHGPSCSHGHHHGHR) is disordered.

Belongs to the UreE family.

The protein localises to the cytoplasm. In terms of biological role, involved in urease metallocenter assembly. Binds nickel. Probably functions as a nickel donor during metallocenter assembly. In Burkholderia mallei (strain SAVP1), this protein is Urease accessory protein UreE.